The primary structure comprises 443 residues: Glutamine synthetase (443 aa).

The GS beta-grasp domain occupies V11–E97. One can recognise a GS catalytic domain in the interval P103 to V443. Residues E126 and E128 each coordinate Mg(2+). E176 lines the ATP pocket. Mg(2+) contacts are provided by E181 and E188. G233 is a binding site for L-glutamate. Residue H237 coordinates Mg(2+). ATP is bound by residues H239 to S241 and S241. L-glutamate-binding residues include R287, E293, and R305. ATP-binding residues include R305 and R310. A Mg(2+)-binding site is contributed by E322. Residue R324 coordinates L-glutamate.

This sequence belongs to the glutamine synthetase family. Oligomer of 12 subunits arranged in the form of two hexagons. It depends on Mg(2+) as a cofactor. The cofactor is Mn(2+).

It localises to the cytoplasm. The enzyme catalyses L-glutamate + NH4(+) + ATP = L-glutamine + ADP + phosphate + H(+). It catalyses the reaction hydroxylamine + L-glutamate + ATP = L-glutamine hydroxamate + ADP + phosphate. Its activity is regulated as follows. The activity of this enzyme is not controlled by adenylation. Its function is as follows. Carries out the ATP-dependent synthesis of glutamine from ammonium nitrogen and glutamate. Exhibits both L-gamma-glutamylhydroxamate synthetase and gamma-glutamyltransferase activities when using hydroxylamine as substrate; in fact, the enzyme possesses low biosynthetic activity, suggesting that the reaction is biased towards the degradation of glutamine under ammonia-rich conditions. Might play some role in ammonia assimilation under ammonia-starvation conditions. Can also use GTP instead of ATP in the synthetase reaction, but not CTP or UTP. The sequence is that of Glutamine synthetase from Thermococcus kodakarensis (strain ATCC BAA-918 / JCM 12380 / KOD1) (Pyrococcus kodakaraensis (strain KOD1)).